A 150-amino-acid chain; its full sequence is Avidin-related protein 3 (150 aa).

A signal peptide spans 1-24; that stretch reads MVHTTSPLLLLLLLSLALVAPSLS. In terms of domain architecture, Avidin-like spans 26–147; it reads RKCSLTGKWT…GYNNFTRQRT (122 aa). Residues Cys-28 and Cys-105 are joined by a disulfide bond. Positions 36, 40, 57, 59, and 63 each coordinate biotin. Asn-93 is a glycosylation site (N-linked (GlcNAc...) asparagine). Residues Ser-95, Ser-99, and Asn-140 each coordinate biotin. An N-linked (GlcNAc...) asparagine glycan is attached at Asn-141.

This sequence belongs to the avidin/streptavidin family. Homotetramer. Post-translationally, glycosylated.

It localises to the secreted. Functionally, forms a strong non-covalent specific complex with biotin. The sequence is that of Avidin-related protein 3 (AVR3) from Gallus gallus (Chicken).